Consider the following 128-residue polypeptide: UPF0212 protein TGAM_1344 (128 aa).

It belongs to the UPF0212 family.

The chain is UPF0212 protein TGAM_1344 from Thermococcus gammatolerans (strain DSM 15229 / JCM 11827 / EJ3).